The following is a 288-amino-acid chain: Centromere protein P (288 aa).

Residues 1–71 adopt a coiled-coil conformation; that stretch reads MDAELAEVRA…HLESELSFLS (71 aa). Serine 38 is subject to Phosphoserine.

It belongs to the CENP-P/CTF19 family. As to quaternary structure, component of the CENPA-CAD complex, composed of CENPI, CENPK, CENPL, CENPO, CENPP, CENPQ, CENPR and CENPS. The CENPA-CAD complex interacts with the CENPA-NAC complex, at least composed of CENPA, CENPC, CENPH, CENPM, CENPN, CENPT and CENPU.

The protein resides in the nucleus. It localises to the chromosome. Its subcellular location is the centromere. Functionally, component of the CENPA-CAD (nucleosome distal) complex, a complex recruited to centromeres which is involved in assembly of kinetochore proteins, mitotic progression and chromosome segregation. May be involved in incorporation of newly synthesized CENPA into centromeres via its interaction with the CENPA-NAC complex. This is Centromere protein P (CENPP) from Homo sapiens (Human).